We begin with the raw amino-acid sequence, 139 residues long: Nucleoside diphosphate kinase (139 aa).

The ATP site is built by Lys-9, Phe-57, Arg-85, Thr-91, Arg-102, and Asn-112. Catalysis depends on His-115, which acts as the Pros-phosphohistidine intermediate.

Belongs to the NDK family. In terms of assembly, homotetramer. The cofactor is Mg(2+).

It localises to the cytoplasm. The enzyme catalyses a 2'-deoxyribonucleoside 5'-diphosphate + ATP = a 2'-deoxyribonucleoside 5'-triphosphate + ADP. The catalysed reaction is a ribonucleoside 5'-diphosphate + ATP = a ribonucleoside 5'-triphosphate + ADP. In terms of biological role, major role in the synthesis of nucleoside triphosphates other than ATP. The ATP gamma phosphate is transferred to the NDP beta phosphate via a ping-pong mechanism, using a phosphorylated active-site intermediate. The protein is Nucleoside diphosphate kinase of Desulfosudis oleivorans (strain DSM 6200 / JCM 39069 / Hxd3) (Desulfococcus oleovorans).